The sequence spans 100 residues: NADH-quinone oxidoreductase subunit K 2 (100 aa).

Helical transmembrane passes span 4–24, 28–48, and 60–80; these read LWWH…GVLL, ILVV…NFIA, and IFAI…LGIL.

The protein belongs to the complex I subunit 4L family. In terms of assembly, NDH-1 is composed of 14 different subunits. Subunits NuoA, H, J, K, L, M, N constitute the membrane sector of the complex.

It is found in the cell inner membrane. The catalysed reaction is a quinone + NADH + 5 H(+)(in) = a quinol + NAD(+) + 4 H(+)(out). In terms of biological role, NDH-1 shuttles electrons from NADH, via FMN and iron-sulfur (Fe-S) centers, to quinones in the respiratory chain. The immediate electron acceptor for the enzyme in this species is believed to be ubiquinone. Couples the redox reaction to proton translocation (for every two electrons transferred, four hydrogen ions are translocated across the cytoplasmic membrane), and thus conserves the redox energy in a proton gradient. This is NADH-quinone oxidoreductase subunit K 2 from Sinorhizobium fredii (strain NBRC 101917 / NGR234).